We begin with the raw amino-acid sequence, 439 residues long: Enolase 2 (439 aa).

The substrate site is built by H160 and E169. E212 acts as the Proton donor in catalysis. The Mg(2+) site is built by D247, E296, and D323. E296 and D323 together coordinate substrate. The Proton acceptor role is filled by K348. Substrate is bound by residues 375–378 (SHRS) and K399.

Belongs to the enolase family. As to quaternary structure, homodimer. Requires Mg(2+) as cofactor.

The protein resides in the cytoplasm. It catalyses the reaction (2R)-2-phosphoglycerate = phosphoenolpyruvate + H2O. The protein operates within carbohydrate degradation; glycolysis; pyruvate from D-glyceraldehyde 3-phosphate: step 4/5. This Debaryomyces hansenii (strain ATCC 36239 / CBS 767 / BCRC 21394 / JCM 1990 / NBRC 0083 / IGC 2968) (Yeast) protein is Enolase 2 (ENO2).